We begin with the raw amino-acid sequence, 274 residues long: tRNA-cytidine(32) 2-sulfurtransferase (274 aa).

Residues 40 to 45 (SGGKDS) carry the PP-loop motif motif. [4Fe-4S] cluster contacts are provided by Cys115, Cys118, and Cys206.

This sequence belongs to the TtcA family. In terms of assembly, homodimer. Requires Mg(2+) as cofactor. [4Fe-4S] cluster is required as a cofactor.

The protein resides in the cytoplasm. The catalysed reaction is cytidine(32) in tRNA + S-sulfanyl-L-cysteinyl-[cysteine desulfurase] + AH2 + ATP = 2-thiocytidine(32) in tRNA + L-cysteinyl-[cysteine desulfurase] + A + AMP + diphosphate + H(+). The protein operates within tRNA modification. Functionally, catalyzes the ATP-dependent 2-thiolation of cytidine in position 32 of tRNA, to form 2-thiocytidine (s(2)C32). The sulfur atoms are provided by the cysteine/cysteine desulfurase (IscS) system. In Pseudomonas putida (strain GB-1), this protein is tRNA-cytidine(32) 2-sulfurtransferase.